Consider the following 145-residue polypeptide: Immunity protein CdiI (145 aa).

As to quaternary structure, interacts with cognate toxin fragment CdiA-CT.

Its function is as follows. Immunity protein component of a toxin-immunity protein module, which functions as a cellular contact-dependent growth inhibition (CDI) system. CDI modules allow bacteria to communicate with and inhibit the growth of closely related neighboring bacteria in a contact-dependent fashion. Protects cells against the 16S rRNase activity of CdiA-CT, its cognate toxin protein, but not against the toxic effects of a similar rRNase, non-cognate CdiA-CT from E.chrysanthemi strain EC16. In Enterobacter cloacae subsp. cloacae (strain ATCC 13047 / DSM 30054 / NBRC 13535 / NCTC 10005 / WDCM 00083 / NCDC 279-56), this protein is Immunity protein CdiI.